Reading from the N-terminus, the 185-residue chain is Dehydrin ERD14 (185 aa).

4 stretches are compositionally biased toward basic and acidic residues: residues 1 to 13, 25 to 45, 52 to 78, and 103 to 134; these read MAEE…EQEV, VTDR…KPEE, FEQK…HRSD, and KPTT…KPED. Disordered regions lie at residues 1-138 and 166-185; these read MAEE…GSAV and EKLP…KDKE. The residue at position 2 (A2) is an N-acetylalanine. A Phosphoserine modification is found at S59. Repeat copies occupy residues 112-132 and 154-174. The tract at residues 112–174 is 2 X 21 AA repeats, Lys-rich; it reads EEEKKGFMEK…KEKLPGYHPK (63 aa).

Belongs to the plant dehydrin family. In terms of tissue distribution, in stems, cauline leaves, roots and flowers. Low levels found in maturing seeds. Absent in dry seeds.

Functionally, intrinsically disordered protein acting as a chaperone. Prevents heat-induced aggregation and/or inactivation of various substrates. Binds to acidic phospholipid vesicles without affecting membrane fluidity. The chain is Dehydrin ERD14 (ERD14) from Arabidopsis thaliana (Mouse-ear cress).